We begin with the raw amino-acid sequence, 748 residues long: 5-methyltetrahydropteroyltriglutamate--homocysteine methyltransferase (748 aa).

Lys-111 contributes to the 5-methyltetrahydropteroyltri-L-glutamate binding site. L-homocysteine contacts are provided by residues 428–430 (IGS) and Glu-478. Residues 428-430 (IGS) and Glu-478 contribute to the L-methionine site. 5-methyltetrahydropteroyltri-L-glutamate is bound by residues 509-510 (RC) and Trp-555. Asp-593 contacts L-homocysteine. Asp-593 contributes to the L-methionine binding site. 5-methyltetrahydropteroyltri-L-glutamate is bound at residue Glu-599. Zn(2+) contacts are provided by His-635, Cys-637, and Glu-659. His-687 functions as the Proton donor in the catalytic mechanism. Cys-719 contributes to the Zn(2+) binding site.

This sequence belongs to the vitamin-B12 independent methionine synthase family. The cofactor is Zn(2+).

The catalysed reaction is 5-methyltetrahydropteroyltri-L-glutamate + L-homocysteine = tetrahydropteroyltri-L-glutamate + L-methionine. Its pathway is amino-acid biosynthesis; L-methionine biosynthesis via de novo pathway; L-methionine from L-homocysteine (MetE route): step 1/1. Catalyzes the transfer of a methyl group from 5-methyltetrahydrofolate to homocysteine resulting in methionine formation. In Herpetosiphon aurantiacus (strain ATCC 23779 / DSM 785 / 114-95), this protein is 5-methyltetrahydropteroyltriglutamate--homocysteine methyltransferase.